The following is a 153-amino-acid chain: Sec-independent protein translocase protein TatB (153 aa).

A helical membrane pass occupies residues 1 to 21; that stretch reads MFGISFSELLLVGLVALLVLG. A disordered region spans residues 78–153; it reads MFAQNQHPET…HDSSLPPRAP (76 aa).

The protein belongs to the TatB family. The Tat system comprises two distinct complexes: a TatABC complex, containing multiple copies of TatA, TatB and TatC subunits, and a separate TatA complex, containing only TatA subunits. Substrates initially bind to the TatABC complex, which probably triggers association of the separate TatA complex to form the active translocon.

The protein resides in the cell inner membrane. Its function is as follows. Part of the twin-arginine translocation (Tat) system that transports large folded proteins containing a characteristic twin-arginine motif in their signal peptide across membranes. Together with TatC, TatB is part of a receptor directly interacting with Tat signal peptides. TatB may form an oligomeric binding site that transiently accommodates folded Tat precursor proteins before their translocation. This Pseudomonas savastanoi pv. phaseolicola (strain 1448A / Race 6) (Pseudomonas syringae pv. phaseolicola (strain 1448A / Race 6)) protein is Sec-independent protein translocase protein TatB.